A 188-amino-acid polypeptide reads, in one-letter code: Murein DD-endopeptidase MepS/Murein LD-carboxypeptidase (188 aa).

A signal peptide spans 1 to 26 (MVKSQPILRYILRGIPAIAVAVLLSA). Residue Cys27 is the site of N-palmitoyl cysteine attachment. The S-diacylglycerol cysteine moiety is linked to residue Cys27. In terms of domain architecture, NlpC/P60 spans 64–185 (VDVKSRIMDQ…KRYNEARRVL (122 aa)). The active-site Nucleophile is the Cys94. His145 serves as the catalytic Proton acceptor. His157 is an active-site residue.

This sequence belongs to the peptidase C40 family. In terms of assembly, monomer.

It is found in the cell outer membrane. The enzyme catalyses N-acetyl-D-glucosaminyl-N-acetylmuramoyl-L-alanyl-meso-2,6-diaminoheptanedioyl-D-alanine + H2O = N-acetyl-D-glucosaminyl-N-acetylmuramoyl-L-alanyl-meso-2,6-diaminoheptanedioate + D-alanine. The protein operates within cell wall biogenesis; cell wall polysaccharide biosynthesis. A murein DD-endopeptidase with specificity for D-Ala-meso-diaminopimelic acid (mDAP) cross-links. Its role is probably to cleave D-Ala-mDAP cross-links to allow insertion of new glycans and thus cell wall expansion. Functionally redundant with MepM and MepH. Also has weak LD-carboxypeptidase activity on L-mDAP-D-Ala peptide bonds. The protein is Murein DD-endopeptidase MepS/Murein LD-carboxypeptidase (mepS) of Escherichia coli O157:H7.